The chain runs to 864 residues: Structure-specific endonuclease subunit SLX4 (864 aa).

8 disordered regions span residues 1-21 (MTTQSSSDGRMFTSSIIPVIP), 49-69 (LSTSTSRGPTRSDTVGDKTQG), 91-113 (TGTGGKAATGKRLKRRTESPGNA), 161-190 (ANQTVSRQPETKISAPKECNDTTQPAGNDH), 289-318 (LSDDRQSSITEDSESATSKPRRVKAKNRPK), 346-385 (TLLSDEPGKEKSAAKRTSGARCAKPGRKKSTTTEKKNEPP), 413-433 (ANGHSEDQHEQNEGTSHISNS), and 625-767 (KAPN…VTSS). Over residues 295–306 (SSITEDSESATS) the composition is skewed to polar residues. The span at 307 to 318 (KPRRVKAKNRPK) shows a compositional bias: basic residues. Residues 656–668 (QPNSISQKATTQV) show a composition bias toward polar residues. The span at 685–695 (VSSRRSTSTSK) shows a compositional bias: low complexity. Polar residues predominate over residues 743 to 767 (PESFNLPTTPLTIRSGKVPSTVTSS).

This sequence belongs to the SLX4 family. As to quaternary structure, forms a heterodimer with SLX1. In terms of processing, phosphorylated in response to DNA damage.

The protein localises to the nucleus. Functionally, regulatory subunit of the SLX1-SLX4 structure-specific endonuclease that resolves DNA secondary structures generated during DNA repair and recombination. Has endonuclease activity towards branched DNA substrates, introducing single-strand cuts in duplex DNA close to junctions with ss-DNA. This chain is Structure-specific endonuclease subunit SLX4, found in Paracoccidioides lutzii (strain ATCC MYA-826 / Pb01) (Paracoccidioides brasiliensis).